We begin with the raw amino-acid sequence, 197 residues long: Thymidylate kinase (197 aa).

Residue 7–14 (GIDGSGKS) participates in ATP binding.

The protein belongs to the thymidylate kinase family.

The catalysed reaction is dTMP + ATP = dTDP + ADP. Phosphorylation of dTMP to form dTDP in both de novo and salvage pathways of dTTP synthesis. The sequence is that of Thymidylate kinase (tmk) from Thermotoga maritima (strain ATCC 43589 / DSM 3109 / JCM 10099 / NBRC 100826 / MSB8).